Here is a 1401-residue protein sequence, read N- to C-terminus: DNA-directed RNA polymerase subunit beta' (1401 aa).

Cys-70, Cys-72, Cys-85, and Cys-88 together coordinate Zn(2+). Asp-460, Asp-462, and Asp-464 together coordinate Mg(2+). Zn(2+) contacts are provided by Cys-808, Cys-882, Cys-889, and Cys-892.

The protein belongs to the RNA polymerase beta' chain family. In terms of assembly, the RNAP catalytic core consists of 2 alpha, 1 beta, 1 beta' and 1 omega subunit. When a sigma factor is associated with the core the holoenzyme is formed, which can initiate transcription. Mg(2+) serves as cofactor. Zn(2+) is required as a cofactor.

The catalysed reaction is RNA(n) + a ribonucleoside 5'-triphosphate = RNA(n+1) + diphosphate. In terms of biological role, DNA-dependent RNA polymerase catalyzes the transcription of DNA into RNA using the four ribonucleoside triphosphates as substrates. The chain is DNA-directed RNA polymerase subunit beta' from Legionella pneumophila (strain Corby).